The primary structure comprises 338 residues: CDP-paratose 2-epimerase (338 aa).

Thr-124 contacts substrate. Catalysis depends on Tyr-164, which acts as the Proton acceptor.

This sequence belongs to the NAD(P)-dependent epimerase/dehydratase family. Homotetramer. The cofactor is NAD(+).

It carries out the reaction CDP-alpha-D-paratose = CDP-3,6-dideoxy-alpha-D-mannose. It functions in the pathway nucleotide-sugar biosynthesis; CDP-3,6-dideoxy-D-mannose biosynthesis; CDP-3,6-dideoxy-D-mannose from CTP and alpha-D-glucose 1-phosphate: step 5/5. In terms of biological role, catalyzes the isomeration of CDP-paratose to CDP-tyvelose. The polypeptide is CDP-paratose 2-epimerase (rfbE) (Salmonella typhi).